The following is a 65-amino-acid chain: Putative per-hexamer repeat protein 2 (65 aa).

This chain is Putative per-hexamer repeat protein 2 (Phxr2), found in Mus musculus (Mouse).